The primary structure comprises 68 residues: Alpha-conotoxin-like Lt1.2 (68 aa).

The N-terminal stretch at 1 to 21 (MGMRMMFIMFMLVVLATTVDT) is a signal peptide. The propeptide occupies 22-48 (FTSDRALDAMNAAASNKASRLIALAVR). Disulfide bonds link Cys50-Cys56 and Cys51-Cys64. A lacks the Ser-Xaa-Pro motif that is crucial for potent interaction with nAChR region spans residues 52–54 (ARA). A Glycine amide modification is found at Gly65.

Belongs to the conotoxin A superfamily. As to expression, expressed by the venom duct.

It localises to the secreted. In terms of biological role, alpha-conotoxins act on postsynaptic membranes, they bind to the nicotinic acetylcholine receptors (nAChR) and thus inhibit them. Has a distinct nAChR binding mode from other alpha-conotoxins, due to a different three residue motif (Ala-Xaa-Ala instead of the conserved Ser-Xaa-Pro motif). The sequence is that of Alpha-conotoxin-like Lt1.2 from Conus litteratus (Lettered cone).